A 341-amino-acid polypeptide reads, in one-letter code: Paired box protein Pax-9 (341 aa).

The paired DNA-binding region spans 4–130 (AFGEVNQLGG…SSISRILRNK (127 aa)). Residues 7–63 (EVNQLGGVFVNGRPLPNAIRLRIVELAQLGIRPCDISRQLRVSHGCVSKILARYNET) form a PAI subdomain region. Residues 82–130 (TVVKHIRTYKQRDPGIFAWEIRDRLLADGVCDKYNVPSVSSISRILRNK) form an RED subdomain region. The interaction with KDM5B stretch occupies residues 168-189 (AAAAKVPTPPGVPAIPGSVAMP).

As to quaternary structure, interacts with KDM5B.

Its subcellular location is the nucleus. Transcription factor required for normal development of thymus, parathyroid glands, ultimobranchial bodies, teeth, skeletal elements of skull and larynx as well as distal limbs. This chain is Paired box protein Pax-9 (PAX9), found in Saguinus oedipus (Cotton-top tamarin).